Reading from the N-terminus, the 219-residue chain is Adenylate kinase (219 aa).

Gly10–Thr15 is an ATP binding site. The interval Ala30–Val59 is NMP. Residues Thr31, Arg36, Gln57 to Val59, Gly85 to Arg88, and Gln92 each bind AMP. The tract at residues Gly126–Asp164 is LID. ATP is bound by residues Arg127 and Val137–Phe138. Residues Arg161 and Arg172 each coordinate AMP. Gly200 contributes to the ATP binding site.

It belongs to the adenylate kinase family. In terms of assembly, monomer.

It is found in the cytoplasm. It carries out the reaction AMP + ATP = 2 ADP. The protein operates within purine metabolism; AMP biosynthesis via salvage pathway; AMP from ADP: step 1/1. Functionally, catalyzes the reversible transfer of the terminal phosphate group between ATP and AMP. Plays an important role in cellular energy homeostasis and in adenine nucleotide metabolism. The sequence is that of Adenylate kinase from Streptomyces griseus subsp. griseus (strain JCM 4626 / CBS 651.72 / NBRC 13350 / KCC S-0626 / ISP 5235).